The sequence spans 607 residues: UvrABC system protein C (607 aa).

The GIY-YIG domain occupies 16–94 (GRPGVYRMFD…IKEWRPPYNI (79 aa)). Residues 203 to 238 (NALTDELSAGMEQAASTLDFEKAAELRDQISLLRRV) enclose the UVR domain.

It belongs to the UvrC family. Interacts with UvrB in an incision complex.

It localises to the cytoplasm. Its function is as follows. The UvrABC repair system catalyzes the recognition and processing of DNA lesions. UvrC both incises the 5' and 3' sides of the lesion. The N-terminal half is responsible for the 3' incision and the C-terminal half is responsible for the 5' incision. The chain is UvrABC system protein C from Pseudomonas protegens (strain DSM 19095 / LMG 27888 / CFBP 6595 / CHA0).